The sequence spans 317 residues: Nuclear distribution protein nudE homolog (317 aa).

The stretch at 29-180 (TDVKQEYDEF…LKQELNVKSR (152 aa)) forms a coiled coil. The tract at residues 186 to 205 (NGTSVPTANDTNTVNSSMNS) is disordered.

It belongs to the nudE family.

The protein resides in the cytoplasm. It is found in the cytoskeleton. It localises to the microtubule organizing center. The protein localises to the centrosome. Its subcellular location is the spindle. Chaperone protein with functions in nuclear localization. Required for centrosome duplication and formation and function of the mitotic spindle. In postmitotic neurons, acts with nudC downstream of dar1 to ensure correct positioning of the nuclei in primary dendrites and as a consequence, is required for determining multipolar neuron morphology. The polypeptide is Nuclear distribution protein nudE homolog (Drosophila melanogaster (Fruit fly)).